Reading from the N-terminus, the 463-residue chain is L-seryl-tRNA(Sec) selenium transferase (463 aa).

At Lys295 the chain carries N6-(pyridoxal phosphate)lysine.

It belongs to the SelA family. As to quaternary structure, homodecamer; pentamer of dimers. Binds only one seryl-tRNA(Sec) per dimer. It depends on pyridoxal 5'-phosphate as a cofactor.

It localises to the cytoplasm. It carries out the reaction L-seryl-tRNA(Sec) + selenophosphate + H(+) = L-selenocysteinyl-tRNA(Sec) + phosphate. The protein operates within aminoacyl-tRNA biosynthesis; selenocysteinyl-tRNA(Sec) biosynthesis; selenocysteinyl-tRNA(Sec) from L-seryl-tRNA(Sec) (bacterial route): step 1/1. Functionally, converts seryl-tRNA(Sec) to selenocysteinyl-tRNA(Sec) required for selenoprotein biosynthesis. This is L-seryl-tRNA(Sec) selenium transferase from Salmonella arizonae (strain ATCC BAA-731 / CDC346-86 / RSK2980).